A 364-amino-acid polypeptide reads, in one-letter code: Spermidine/putrescine import ATP-binding protein PotA (364 aa).

The ABC transporter domain maps to 5 to 235 (LSFKGVTKGF…PVNRFVADFI (231 aa)). Position 37 to 44 (37 to 44 (GPSGCGKT)) interacts with ATP.

It belongs to the ABC transporter superfamily. Spermidine/putrescine importer (TC 3.A.1.11.1) family. In terms of assembly, the complex is composed of two ATP-binding proteins (PotA), two transmembrane proteins (PotB and PotC) and a solute-binding protein (PotD).

The protein resides in the cell membrane. The catalysed reaction is ATP + H2O + polyamine-[polyamine-binding protein]Side 1 = ADP + phosphate + polyamineSide 2 + [polyamine-binding protein]Side 1.. Its function is as follows. Part of the ABC transporter complex PotABCD involved in spermidine/putrescine import. Responsible for energy coupling to the transport system. This chain is Spermidine/putrescine import ATP-binding protein PotA, found in Staphylococcus haemolyticus (strain JCSC1435).